The primary structure comprises 102 residues: Protein GOLVEN 4 (102 aa).

A signal peptide spans 1–27; sequence MEMKKWSYANLITLALLFLFFIILLLA. Residues 28-89 constitute a propeptide that is removed on maturation; that stretch reads FQGGSRDDDH…QEREVYVELR (62 aa). A disordered region spans residues 56–78; it reads KSLKPINPTKKNGFEYPDQGSHD. At Tyr-91 the chain carries Sulfotyrosine. Pro-99 carries the hydroxyproline modification.

This sequence belongs to the RGF family. In terms of assembly, binds to LRR receptor-like serine/threonine-protein kinases to trigger their dimerization with SERK proteins and subsequent signaling. Expressed in roots and sepals.

It is found in the secreted. In terms of biological role, signaling peptide (root growth factor) that promotes root hairs formation and growth. Maintains the postembryonic root stem cell niche. Regulates the pattern of root growth and lateral root development by modulating the length and the number of cortical cells in the root apical meristem (RAM), and the anticlinal asymmetric cell divisions in lateral root initiation cells. This chain is Protein GOLVEN 4, found in Arabidopsis thaliana (Mouse-ear cress).